We begin with the raw amino-acid sequence, 246 residues long: Nuclear transcription factor Y subunit C-2 (246 aa).

2 disordered regions span residues 1 to 35 (MDNQQLPYAGQPAAAGAGAPVPGVPGAGGPPAVPH) and 205 to 246 (QQGA…PSSE). Over residues 9-21 (AGQPAAAGAGAPV) the composition is skewed to low complexity.

Belongs to the NFYC/HAP5 subunit family. As to quaternary structure, heterotrimeric transcription factor composed of three components, NF-YA, NF-YB and NF-YC. NF-YB and NF-YC must interact and dimerize for NF-YA association and DNA binding. Interacts with NFYB8, NFYB10 and HD5/NFYB11.

The protein resides in the nucleus. It localises to the cytoplasm. Its function is as follows. Probable transcription factor involved in the regulation of flowering time under long day (LD) conditions. Functions as a repressor of flowering, independently of HD1 and GHD7. Controls flowering time by negatively regulating the expression of EHD1 and HD3A. Component of the NF-Y/HAP transcription factor complex. This Oryza sativa subsp. japonica (Rice) protein is Nuclear transcription factor Y subunit C-2.